The primary structure comprises 231 residues: 5'-methylthioadenosine/S-adenosylhomocysteine nucleosidase (231 aa).

Glu-12 acts as the Proton acceptor in catalysis. Residues Gly-78, Val-153, and 174 to 175 each bind substrate; that span reads ME. The active-site Proton donor is Asp-198.

The protein belongs to the PNP/UDP phosphorylase family. MtnN subfamily.

It catalyses the reaction S-adenosyl-L-homocysteine + H2O = S-(5-deoxy-D-ribos-5-yl)-L-homocysteine + adenine. It carries out the reaction S-methyl-5'-thioadenosine + H2O = 5-(methylsulfanyl)-D-ribose + adenine. The enzyme catalyses 5'-deoxyadenosine + H2O = 5-deoxy-D-ribose + adenine. It functions in the pathway amino-acid biosynthesis; L-methionine biosynthesis via salvage pathway; S-methyl-5-thio-alpha-D-ribose 1-phosphate from S-methyl-5'-thioadenosine (hydrolase route): step 1/2. In terms of biological role, catalyzes the irreversible cleavage of the glycosidic bond in both 5'-methylthioadenosine (MTA) and S-adenosylhomocysteine (SAH/AdoHcy) to adenine and the corresponding thioribose, 5'-methylthioribose and S-ribosylhomocysteine, respectively. Also cleaves 5'-deoxyadenosine, a toxic by-product of radical S-adenosylmethionine (SAM) enzymes, into 5-deoxyribose and adenine. The sequence is that of 5'-methylthioadenosine/S-adenosylhomocysteine nucleosidase from Vibrio atlanticus (strain LGP32) (Vibrio splendidus (strain Mel32)).